The chain runs to 687 residues: MSKELFLEIGTEEIPAGFLPKAMADMEAIVTKELENARLAFGEVKTFATPRRLALVVKGLPTVQPDAEITALGPARNIAFGPDGTPSKAAEGFARGQGVDVASLTLVSTEKGEYVAAVRKESGRPVPDLLAEILPRLVGGIPFRKSMRWADLDVRFARPIHWIVALFDGVVVPFAFGNVQSGNVSRGHRFMANQPFPVRDFAHYLDECERHFVIPDPERRKETIRREIHRVAKTAGGHLLPDEGLLDEVAYLVEYPSVVHGTFSPDFLKVPREVLITSMRSHQRYFSIVDDAGKLMPGFITINNTLTEDPSVVVKGNERVLRARLSDARFFFEEDQKVKLETRVESLKNVVYQQKLGTSYEKMERFRALAEGLADLLNPAVKAKTSRAAFLCKADLVSGMVGEFPEVQGIMGREYALLQGEDAEVAAAIAEHYLPTQAGGDLPASDIGAFVSIADKLDTICGCFGVGLIPTGSADPYALRRSALGIINIILDRGCRLSLEGEIGKALELLSAKLTRPAAEVMADVLEFFRGRFVNLMADRYPADAVDAAIAAGFDDLVDAEARIGALAAFKGRPDFDSLAVAFKRVCNIVKDGVDQPVDAALFQEPAEGALFAAFQQVRADVEARTASGDYLAALTGIAALKGAVDDFFDKVMVMAEDERVRTNRLALLTGIARLFGGVADFAKIAA.

Belongs to the class-II aminoacyl-tRNA synthetase family. Tetramer of two alpha and two beta subunits.

Its subcellular location is the cytoplasm. It carries out the reaction tRNA(Gly) + glycine + ATP = glycyl-tRNA(Gly) + AMP + diphosphate. The polypeptide is Glycine--tRNA ligase beta subunit (Geobacter sulfurreducens (strain ATCC 51573 / DSM 12127 / PCA)).